Consider the following 163-residue polypeptide: Anaerobic nitrite reductase HB1 (163 aa).

The region spanning 8–157 (VFTEEQEALV…LVAAIKIEMK (150 aa)) is the Globin domain. Residues 41-45 (EIAPS) carry the Homodimerization motif. Residues Ser51, Lys65, His69, Lys99, Thr103, and His104 each contribute to the heme b site. The Homodimerization motif lies at 111 to 123 (DEHFEVTKFALLE).

This sequence belongs to the plant globin family. In terms of assembly, homodimer. Requires heme b as cofactor.

It is found in the cytoplasm. Its subcellular location is the nucleus. It carries out the reaction Fe(III)-heme b-[protein] + nitric oxide + H2O = Fe(II)-heme b-[protein] + nitrite + 2 H(+). Phytoglobin that reduces nitrite to nitric oxide (NO) under anoxic conditions (e.g. during flooding or in waterlogged soil). May not function as an oxygen storage or transport protein. Has an unusually high affinity for O(2) through an hexacoordinate heme iron because of a very low dissociation constant. This is Anaerobic nitrite reductase HB1 from Gossypium hirsutum (Upland cotton).